Consider the following 597-residue polypeptide: Elongation factor 4 (597 aa).

One can recognise a tr-type G domain in the interval Asp2–Lys184. Residues Asp14–Thr19 and Asn131–Asp134 each bind GTP.

It belongs to the TRAFAC class translation factor GTPase superfamily. Classic translation factor GTPase family. LepA subfamily.

It localises to the cell inner membrane. It catalyses the reaction GTP + H2O = GDP + phosphate + H(+). Required for accurate and efficient protein synthesis under certain stress conditions. May act as a fidelity factor of the translation reaction, by catalyzing a one-codon backward translocation of tRNAs on improperly translocated ribosomes. Back-translocation proceeds from a post-translocation (POST) complex to a pre-translocation (PRE) complex, thus giving elongation factor G a second chance to translocate the tRNAs correctly. Binds to ribosomes in a GTP-dependent manner. This Paraburkholderia phytofirmans (strain DSM 17436 / LMG 22146 / PsJN) (Burkholderia phytofirmans) protein is Elongation factor 4.